The following is a 233-amino-acid chain: 7-cyano-7-deazaguanine synthase (233 aa).

Residue 18–28 (FSGGQDSTTCL) participates in ATP binding. Zn(2+) is bound by residues Cys198, Cys213, Cys216, and Cys219.

The protein belongs to the QueC family. The cofactor is Zn(2+).

The enzyme catalyses 7-carboxy-7-deazaguanine + NH4(+) + ATP = 7-cyano-7-deazaguanine + ADP + phosphate + H2O + H(+). It functions in the pathway purine metabolism; 7-cyano-7-deazaguanine biosynthesis. Functionally, catalyzes the ATP-dependent conversion of 7-carboxy-7-deazaguanine (CDG) to 7-cyano-7-deazaguanine (preQ(0)). This chain is 7-cyano-7-deazaguanine synthase, found in Wolinella succinogenes (strain ATCC 29543 / DSM 1740 / CCUG 13145 / JCM 31913 / LMG 7466 / NCTC 11488 / FDC 602W) (Vibrio succinogenes).